The sequence spans 52 residues: Large ribosomal subunit protein bL32c (52 aa).

The protein belongs to the bacterial ribosomal protein bL32 family.

Its subcellular location is the plastid. It is found in the chloroplast. The protein is Large ribosomal subunit protein bL32c of Arabis hirsuta (Hairy rock-cress).